The chain runs to 394 residues: Protein LAX PANICLE 2 (394 aa).

The tract at residues 1–193 is disordered; the sequence is MVPARSLAHP…PTPRHHHHDV (193 aa). The segment covering 8 to 20 has biased composition (basic residues); sequence AHPHPHLVRRRRD. A compositionally biased stretch (basic and acidic residues) spans 60-84; it reads QHDPPKQPPPREADDDHHRIQEREP. 3 stretches are compositionally biased toward low complexity: residues 90 to 101, 119 to 131, and 146 to 155; these read TTTRNQRLQLQL, GTSG…SSSN, and GPASPGASAG. Over residues 170 to 185 the composition is skewed to pro residues; that stretch reads APQPPTPTPTPTPTPT.

Interacts with LAX1.

It localises to the nucleus. Functionally, involved in the regulation of shoot branching by controlling axillary meristem (AM) formation. Functions in association with LAX1 to regulate the process of AM formation. Possesses transactivation activity in yeast. This Oryza sativa subsp. japonica (Rice) protein is Protein LAX PANICLE 2.